The sequence spans 520 residues: Serine/threonine-protein kinases drp72 (520 aa).

The 262-residue stretch at 20–281 folds into the Protein kinase domain; that stretch reads YTLQWIVGHG…NELARAVSAV (262 aa). ATP is bound by residues 26 to 34 and K49; that span reads VGHGGMSTV. Catalysis depends on D148, which acts as the Proton acceptor. Disordered regions lie at residues 315–334 and 366–504; these read ARPTTSVPASPTVLPERQEK and SGDS…DAAD. The segment covering 374 to 394 has biased composition (low complexity); sequence TPETITQTVTPTETTTSEEPT. Residues 395-411 are compositionally biased toward pro residues; that stretch reads LAPPPVQPTRQPVPTPD. Over residues 416–429 the composition is skewed to polar residues; sequence RLPTTTQESPTRVS. Residues 440 to 449 show a composition bias toward low complexity; sequence EQTTPGGQPP. Residues 450–460 show a composition bias toward polar residues; the sequence is LSTLPTSLGWQ. Residues 469-484 show a composition bias toward low complexity; it reads QGNPNTTGNPANPGTP. Positions 485–496 are enriched in gly residues; it reads GTTGGNGTGNAG.

The protein belongs to the protein kinase superfamily. Ser/Thr protein kinase family.

The enzyme catalyses L-seryl-[protein] + ATP = O-phospho-L-seryl-[protein] + ADP + H(+). The catalysed reaction is L-threonyl-[protein] + ATP = O-phospho-L-threonyl-[protein] + ADP + H(+). This chain is Serine/threonine-protein kinases drp72, found in Corynebacterium efficiens (strain DSM 44549 / YS-314 / AJ 12310 / JCM 11189 / NBRC 100395).